Reading from the N-terminus, the 493-residue chain is Glutamyl-tRNA(Gln) amidotransferase subunit A (493 aa).

Residues Lys-78 and Ser-158 each act as charge relay system in the active site. Catalysis depends on Ser-182, which acts as the Acyl-ester intermediate.

It belongs to the amidase family. GatA subfamily. As to quaternary structure, heterotrimer of A, B and C subunits.

It carries out the reaction L-glutamyl-tRNA(Gln) + L-glutamine + ATP + H2O = L-glutaminyl-tRNA(Gln) + L-glutamate + ADP + phosphate + H(+). Functionally, allows the formation of correctly charged Gln-tRNA(Gln) through the transamidation of misacylated Glu-tRNA(Gln) in organisms which lack glutaminyl-tRNA synthetase. The reaction takes place in the presence of glutamine and ATP through an activated gamma-phospho-Glu-tRNA(Gln). The protein is Glutamyl-tRNA(Gln) amidotransferase subunit A of Rickettsia bellii (strain RML369-C).